Here is a 239-residue protein sequence, read N- to C-terminus: Pyridoxine 5'-phosphate synthase (239 aa).

Asn-9 contacts 3-amino-2-oxopropyl phosphate. 11-12 (DH) lines the 1-deoxy-D-xylulose 5-phosphate pocket. Arg-20 lines the 3-amino-2-oxopropyl phosphate pocket. The active-site Proton acceptor is His-45. 2 residues coordinate 1-deoxy-D-xylulose 5-phosphate: Arg-47 and His-52. Glu-72 functions as the Proton acceptor in the catalytic mechanism. Residue Thr-102 participates in 1-deoxy-D-xylulose 5-phosphate binding. The active-site Proton donor is His-189. 3-amino-2-oxopropyl phosphate is bound by residues Gly-190 and 211 to 212 (GH).

It belongs to the PNP synthase family. As to quaternary structure, homooctamer; tetramer of dimers.

Its subcellular location is the cytoplasm. The catalysed reaction is 3-amino-2-oxopropyl phosphate + 1-deoxy-D-xylulose 5-phosphate = pyridoxine 5'-phosphate + phosphate + 2 H2O + H(+). It participates in cofactor biosynthesis; pyridoxine 5'-phosphate biosynthesis; pyridoxine 5'-phosphate from D-erythrose 4-phosphate: step 5/5. Catalyzes the complicated ring closure reaction between the two acyclic compounds 1-deoxy-D-xylulose-5-phosphate (DXP) and 3-amino-2-oxopropyl phosphate (1-amino-acetone-3-phosphate or AAP) to form pyridoxine 5'-phosphate (PNP) and inorganic phosphate. The sequence is that of Pyridoxine 5'-phosphate synthase from Ehrlichia chaffeensis (strain ATCC CRL-10679 / Arkansas).